Reading from the N-terminus, the 673-residue chain is Polygalacturonate 4-alpha-galacturonosyltransferase (673 aa).

Residues Met-1 to Ser-22 lie on the Cytoplasmic side of the membrane. The helical; Signal-anchor for type II membrane protein transmembrane segment at Val-23 to Gly-43 threads the bilayer. Residues Val-44–Glu-673 lie on the Lumenal side of the membrane. The N-linked (GlcNAc...) asparagine glycan is linked to Asn-103. Residues Gly-112 to Lys-136 form a disordered region. N-linked (GlcNAc...) asparagine glycans are attached at residues Asn-382, Asn-434, Asn-538, and Asn-585.

The protein belongs to the glycosyltransferase 8 family. As to expression, expressed in seedlings, inflorescences, flowers, siliques, pollen, roots, stems and leaves.

The protein resides in the golgi apparatus membrane. The enzyme catalyses [(1-&gt;4)-alpha-D-galacturonosyl](n) + UDP-alpha-D-galacturonate = [(1-&gt;4)-alpha-D-galacturonosyl](n+1) + UDP + H(+). Its pathway is glycan metabolism; pectin biosynthesis. Functionally, involved in pectin biosynthesis. Catalyzes the transfer of galacturonic acid from uridine 5'-diphosphogalacturonic acid onto the pectic polysaccharide homogalacturonan. The protein is Polygalacturonate 4-alpha-galacturonosyltransferase (GAUT1) of Arabidopsis thaliana (Mouse-ear cress).